Reading from the N-terminus, the 119-residue chain is uncharacterized protein (119 aa).

The helical transmembrane segment at 30–50 (LMTLPCVLFLSSFGQAVIVVL) threads the bilayer.

It is found in the membrane. This is an uncharacterized protein from Saccharomyces cerevisiae (strain ATCC 204508 / S288c) (Baker's yeast).